A 338-amino-acid polypeptide reads, in one-letter code: Phenylalanine--tRNA ligase alpha subunit (338 aa).

Glutamate 252 is a Mg(2+) binding site.

This sequence belongs to the class-II aminoacyl-tRNA synthetase family. Phe-tRNA synthetase alpha subunit type 1 subfamily. As to quaternary structure, tetramer of two alpha and two beta subunits. Requires Mg(2+) as cofactor.

It localises to the cytoplasm. The enzyme catalyses tRNA(Phe) + L-phenylalanine + ATP = L-phenylalanyl-tRNA(Phe) + AMP + diphosphate + H(+). The sequence is that of Phenylalanine--tRNA ligase alpha subunit from Pseudomonas fluorescens (strain Pf0-1).